The following is a 429-amino-acid chain: MLLAGAIFVLTIVLVIWQPKGLGIGWSATLGAVLALVTGVVHPGDIPVVWNIVWNATAAFIAVIIISLLLDESGFFEWAALHVSRWGNGRGRLLFTWIVLLGAAVAALFANDGAALILTPIVIAMLLALGFSKGTTLAFVMAAGFIADTASLPLIVSNLVNIVSADFFGLGFREYASVMVPVDIAAIVATLVMLHLYFRKDIPQNYDMALLKSPAEAIKDPATFKTGWVVLLLLLVGFFVLEPLGIPVSAIAAVGALILFVVAKRGHAINTGKVLRGAPWQIVIFSLGMYLVVYGLRNAGLTEYLSGVLNVLADNGLWAATLGTGFLTAFLSSIMNNMPTVLVGALSIDGSTASGVIKEAMVYANVIGCDLGPKITPIGSLATLLWLHVLSQKNMTISWGYYFRTGIIMTLPVLFVTLAALALRLSFTL.

Topologically, residues 1 to 20 (MLLAGAIFVLTIVLVIWQPK) are cytoplasmic. Residues 21 to 41 (GLGIGWSATLGAVLALVTGVV) traverse the membrane as a helical segment. The Periplasmic portion of the chain corresponds to 42–45 (HPGD). The chain crosses the membrane as a helical span at residues 46 to 66 (IPVVWNIVWNATAAFIAVIII). At 67 to 97 (SLLLDESGFFEWAALHVSRWGNGRGRLLFTW) the chain is on the cytoplasmic side. Residues 98–118 (IVLLGAAVAALFANDGAALIL) form a helical membrane-spanning segment. At 119-120 (TP) the chain is on the periplasmic side. A helical transmembrane segment spans residues 121–141 (IVIAMLLALGFSKGTTLAFVM). The Cytoplasmic segment spans residues 142–151 (AAGFIADTAS). A helical membrane pass occupies residues 152–172 (LPLIVSNLVNIVSADFFGLGF). Over 173–177 (REYAS) the chain is Periplasmic. A helical transmembrane segment spans residues 178-198 (VMVPVDIAAIVATLVMLHLYF). Residues 199–227 (RKDIPQNYDMALLKSPAEAIKDPATFKTG) lie on the Cytoplasmic side of the membrane. 2 consecutive transmembrane segments (helical) span residues 228–248 (WVVL…GIPV) and 249–269 (SAIA…GHAI). Residues 270-273 (NTGK) lie on the Cytoplasmic side of the membrane. Residues 274–294 (VLRGAPWQIVIFSLGMYLVVY) form a helical membrane-spanning segment. Residues 295–310 (GLRNAGLTEYLSGVLN) lie on the Periplasmic side of the membrane. A helical membrane pass occupies residues 311-331 (VLADNGLWAATLGTGFLTAFL). Residues 332–406 (SSIMNNMPTV…ISWGYYFRTG (75 aa)) lie on the Cytoplasmic side of the membrane. Residues 407–427 (IIMTLPVLFVTLAALALRLSF) traverse the membrane as a helical segment. Topologically, residues 428 to 429 (TL) are periplasmic.

It belongs to the ArsB family.

The protein resides in the cell inner membrane. In terms of biological role, involved in arsenical resistance. Thought to form the channel of an arsenite pump. The sequence is that of Arsenical pump membrane protein (arsB) from Shigella flexneri.